The chain runs to 2167 residues: RNA editing associated helicase 2 (2167 aa).

The N-terminal 30 residues, 1–30, are a transit peptide targeting the mitochondrion; that stretch reads MRAIRLTVACRYLGPFRSVTLSPVVLPVRL. Disordered stretches follow at residues 503-593 and 937-969; these read RARG…DEAT and ENAT…PTNV. The segment covering 532-541 has biased composition (low complexity); the sequence is SSTQTPSSST. One can recognise a DRBM domain in the interval 1024-1095; sequence DAKTVLQRYC…AMHALALLRR (72 aa). The Helicase ATP-binding domain occupies 1348–1513; sequence LRAISSNQIV…FGNAPIINVE (166 aa). 1361 to 1368 serves as a coordination point for ATP; sequence GTTGCGKT. The Important for binding to gRNA motif lies at 1366 to 1367; sequence GK. The short motif at 1460–1463 is the DEAH box element; sequence DEIH. The region spanning 1585-1762 is the Helicase C-terminal domain; that stretch reads AIDHAVRSLD…SLCLQILALD (178 aa). The segment at 2132 to 2167 is disordered; the sequence is IIEPCTEPKGGSSEAEKTHVNSSHTPTTSAEAGGDS. The segment covering 2151–2161 has biased composition (polar residues); sequence VNSSHTPTTSA.

This sequence belongs to the DEAD box helicase family. DEAH subfamily. As to quaternary structure, component of the REH2-associated complex (REH2C) composed of helicase REH2, associated factors H2F1 and H2F2, and mRNAs at various editing stages; the formation of the complex is RNA-independent. Within the complex, interacts with H2F1; the interaction is direct. Interacts transiently, in a RNA-dependent manner, with various editing complexes including the RNA editing core (RECC) complex, the gRNA-binding (GRBC) complex (also known as the MRB1 complex) and the RNA editing mediator (REMC) complex. Interacts with GAP1/GRBC2 via RNA forming a variant of the GRBC complex known as REH2-GRBC complex. Interacts with mitochondrial ribosomes.

It is found in the mitochondrion. It catalyses the reaction ATP + H2O = ADP + phosphate + H(+). ATP-dependent RNA helicase that unwinds RNA in a 3' to 5' direction and that plays an important role in mitochondrial mRNA editing, a process involving the addition and deletion of uridine (U) nucleotides in the pre-mRNA. As part of the RET2-containing gRNA-binding (RET2-GRBC) complex, acts as a scaffold for the assembly of mRNA-gRNA hybrids and the recruitment of the RNA editing core (RECC) complex. Regulates several steps of mRNA editing by the MRBC3010/GRBC6 containing gRNA-binding (MRBC3010-GRBC) complex including loading of unedited mRNA, editing in the first sequence block and subsequent editing progression across multiple sequence blocks. Also, regulates the RNA substrate content of the MRBC3010-GRBC complex as well as the association of this complex with mitoribosomes. This Trypanosoma brucei brucei (strain 927/4 GUTat10.1) protein is RNA editing associated helicase 2.